Consider the following 419-residue polypeptide: Divergent protein kinase domain 1C (419 aa).

The Cytoplasmic portion of the chain corresponds to 1 to 22; the sequence is MARAAGARGPAGWCRRRGRCGR. Residues 16–17 carry the May mediate ER retention motif; the sequence is RR. The chain crosses the membrane as a helical span at residues 23–43; that stretch reads GTLLAFAAWTAGWVLAAALLL. The Lumenal segment spans residues 44–419; it reads RAHPGVLSER…TLRELQEAEK (376 aa).

This sequence belongs to the DIPK family. Among the many cysteines in the lumenal domain, most are probably involved in disulfide bonds.

Its subcellular location is the endoplasmic reticulum membrane. This Homo sapiens (Human) protein is Divergent protein kinase domain 1C.